We begin with the raw amino-acid sequence, 764 residues long: ATP-dependent DNA helicase DDM1 (764 aa).

The disordered stretch occupies residues 1–42; sequence MVSLRSRKVIPASEMVSDGKTEKDASGDSPTSVLNEEENCEE. Residues 17–26 show a composition bias toward basic and acidic residues; the sequence is SDGKTEKDAS. A coiled-coil region spans residues 62-88; the sequence is LISEAMAQEEEQLLKLREDEEKANNAG. Positions 129-152 are disordered; the sequence is IESESQKAEPEKTGRGRKRKAASQ. The segment covering 132–142 has biased composition (basic and acidic residues); sequence ESQKAEPEKTG. The short motif at 145–152 is the Nuclear localization signal 1 element; it reads RKRKAASQ. The Helicase ATP-binding domain occupies 214–382; that stretch reads ISLWQNGLNG…WSLLNFILPD (169 aa). 227-234 contacts ATP; that stretch reads DQMGLGKT. A DEAH box motif is present at residues 333-336; the sequence is DEGH. The Nuclear localization signal 2 motif lies at 429–436; that stretch reads LRRMKCDV. Residues 528 to 695 form the Helicase C-terminal domain; it reads LLERLLVRLF…STPLEEEDIL (168 aa).

It belongs to the SNF2/RAD54 helicase family. As to quaternary structure, interacts with the MBD domains of MBD2, MBD5 and MBD6.

It localises to the nucleus. It catalyses the reaction ATP + H2O = ADP + phosphate + H(+). Its activity is regulated as follows. ATPase activity is stimulated 3-fold by DNA (both free and nucleosomal) binding. Its function is as follows. ATP-dependent DNA helicase that plays a role in formation, organization, stability and heritability of heterochromatin and thus regulates several physiological traits. Binds to the nucleosome and promotes chromatin remodeling in an ATP-dependent manner; induces nucleosome repositioning on a short DNA fragment, and, possibly, could be guided to target sites (including silent transposable elements) by small interfering RNAs (siRNAs). Can bind both free and nucleosomal DNA. Required for the heritable maintenance of genome integrity and transcriptional gene silencing (TGS), including homology-dependent gene silencing (HDG silencing), via the maintenance of DNA methylation (mostly on cytosine, in both CpG and CpHpG sites, where H is A, T or C) and of histone methylation (e.g. chromatin methylation). May facilitate localization of MBD proteins at specific nuclear domains. Necessary for the maintenance of the genomic imprint at the MEA locus, especially for the silencing of paternally inherited MEA locus. Plays a major role in the inactivation maintenance of retrotransposons (e.g. Tar17, SINE, LINE, ATLN39, CAC1 (CACTAs), Athila elements, and mutator-like elements MULEs and TIR-MULEs) and the silencing of repeated genes and transgenes (e.g. T-DNA insertions). Required for KYP-dependent histone H3 'Lys-9' (H3K9me) methylation, deacetylation of histone H4 'Lys-16' (H4K16) and MET1-dependent DNA methylation. Involved in the chromatin organization of 5S rRNA genes (localized in the pericentromeric heterochromatin of chromosomes 3, 4, and 5) modifications during heterochromatin establishment. Prevents siRNA accumulation (siRNA are probably involved in epigenetic inheritance and in 5S rRNA genes regulation by silencing). Required during plant organogenesis and development, as well as during seed formation. This Arabidopsis thaliana (Mouse-ear cress) protein is ATP-dependent DNA helicase DDM1 (DDM1).